The following is a 382-amino-acid chain: D-galactonate dehydratase (382 aa).

D183 is a binding site for Mg(2+). H185 serves as the catalytic Proton donor. 2 residues coordinate Mg(2+): E209 and E235. The Proton acceptor role is filled by H285.

Belongs to the mandelate racemase/muconate lactonizing enzyme family. GalD subfamily. Mg(2+) serves as cofactor.

It catalyses the reaction D-galactonate = 2-dehydro-3-deoxy-D-galactonate + H2O. Its pathway is carbohydrate acid metabolism; D-galactonate degradation; D-glyceraldehyde 3-phosphate and pyruvate from D-galactonate: step 1/3. Its function is as follows. Catalyzes the dehydration of D-galactonate to 2-keto-3-deoxy-D-galactonate. This chain is D-galactonate dehydratase, found in Ralstonia pickettii (strain 12J).